An 829-amino-acid chain; its full sequence is MSEDHVQNDSQIEAVFRVNDSHKHKKDKEHRHKEHKKDKDREKSKHNNSEHRDPSEKKHKDKHKNNDKHREKDGEKHRERDGEKHRDKNGEKHRDGEKHKEKDIEKHKEVEKHRVKDGEKHKEKDVEKHKEKDVEKHRDGEKHKHRDKDREKKKEEKMKSSSGGVKVKKENGFSSPVRVKDEPEDQGFYVSPKENKAMKRPREDDEDYKPKKIKSEDDKKGKKRKQEEEDIKPKKKSKAKGNEEGVKKKKVKKEEEEKWKWWEEERHRDGIKWKFLEHKGPVFAPPYEPVPDNVKFYYDGNLVKLSPKAEEVATFFAKMLDHEYTTKDIFRKNFFKDWKKEMTTDERNLITNLSKCDFNAMSLYFKEQSEARKNMTKEEKLKIKAENERLLQEYGYCIMDNHKERIANFRIEPPGLFRGRGDHPKMGKLKKRIMPEDIIINCSKDSKIPVAPAGHKWKEVRHDGKVTWLVSWTENIQGSIKYIMLNPSSRIKGEKDWQKYETARRLKMCVEKIRNTYKEDWKSKEMKVRQRAVALYFIDKLALRAGNEKEEGETADTVGCCSLRVEHINLFQELDGQEFVVEFDFPGKDSIRYYNKVPVEKRVFKNLQLFMENKQPDDDLFDRLNTSILNKHLQDLMEGLTAKVFRTYNASITLQQQLDELTNSDDNVPAKILSYNRANRAVAILCNHQRAPPKTFEKSMMNLQGKIDAKKDQLADARREFKSAKADAKVRRDEKTKKLVESKKKAVQRIEEQLMKLEVQATDREENKQIALGTSKLNYLDPRISVAWCKKYGVPIEKIYNKTQRKNLLGPSIWQTTTSNFNAEQRCFS.

The tract at residues 1 to 248 is disordered; the sequence is MSEDHVQNDS…AKGNEEGVKK (248 aa). Positions 22–36 are enriched in basic residues; it reads HKHKKDKEHRHKEHK. 3 stretches are compositionally biased toward basic and acidic residues: residues 37–58, 68–159, and 193–220; these read KDKDREKSKHNNSEHRDPSEKK, KHRE…EKMK, and KENKAMKRPREDDEDYKPKKIKSEDDKK. 3 interaction with DNA regions span residues 481–482, 544–549, and 641–643; these read KY, RAGNEK, and TAK. The 334-residue stretch at 488–821 folds into the Topo IB-type catalytic domain; sequence SSRIKGEKDW…SIWQTTTSNF (334 aa). Y779 (O-(3'-phospho-DNA)-tyrosine intermediate) is an active-site residue.

The protein belongs to the type IB topoisomerase family. In terms of assembly, monomer.

It is found in the nucleus. The catalysed reaction is ATP-independent breakage of single-stranded DNA, followed by passage and rejoining.. Its function is as follows. Releases the supercoiling and torsional tension of DNA introduced during the DNA replication and transcription by transiently cleaving and rejoining one strand of the DNA duplex. Introduces a single-strand break via transesterification at a target site in duplex DNA. The scissile phosphodiester is attacked by the catalytic tyrosine of the enzyme, resulting in the formation of a DNA-(3'-phosphotyrosyl)-enzyme intermediate and the expulsion of a 5'-OH DNA strand. TThe free DNA strand then rotates around the intact phosphodiester bond on the opposing strand, thus removing DNA supercoils. Finally, in the religation step, the DNA 5'-OH attacks the covalent intermediate to expel the active-site tyrosine and restore the DNA phosphodiester backbone. May play a role in the circadian transcription of the core circadian clock component BMAL1. The chain is DNA topoisomerase 1 (top1) from Xenopus laevis (African clawed frog).